The sequence spans 1028 residues: Contactin-3 (1028 aa).

An N-terminal signal peptide occupies residues 1–19 (MMLSWKQLILLSFIGCLAG). Ig-like C2-type domains are found at residues 26-117 (PVFV…AKLQ), 122-208 (ENFK…ARVL), 227-313 (PKIE…GRLT), 318-402 (PYWV…AELK), 408-497 (PDFS…LVVT), and 499-593 (PTRI…AELI). 5 cysteine pairs are disulfide-bonded: Cys-50–Cys-100, Cys-144–Cys-196, Cys-249–Cys-297, Cys-339–Cys-386, and Cys-431–Cys-479. Asn-65 and Asn-193 each carry an N-linked (GlcNAc...) asparagine glycan. N-linked (GlcNAc...) asparagine glycans are attached at residues Asn-377, Asn-468, Asn-489, and Asn-538. Cys-521 and Cys-577 are joined by a disulfide. 4 consecutive Fibronectin type-III domains span residues 600 to 698 (PPEN…TEEA), 703 to 800 (APSE…SAEE), 805 to 901 (APSH…TKKT), and 902 to 998 (PPSQ…TSMD). Positions 684–714 (GEPSLPSEKVRTEEAAPEVAPSEVSGGGGSR) are disordered. N-linked (GlcNAc...) asparagine glycosylation is found at Asn-765, Asn-860, Asn-895, Asn-913, Asn-931, and Asn-956. Ser-1002 carries the GPI-anchor amidated serine lipid modification. The propeptide at 1003–1028 (TSAISDIHPVSGYISVLLFFIVNALW) is removed in mature form.

It belongs to the immunoglobulin superfamily. Contactin family. Interacts with PTPRG. In terms of tissue distribution, specifically expressed in brain. Not expressed in peripheral tissues such as heart, lung, liver, spleen, kidney and skeletal muscle. In brain, it is restricted to subsets of neurons such as Purkinje cells of the cerebellum, granule cells of the dentate gyrus, and neurons in the superficial layers of the cerebral cortex.

Its subcellular location is the cell membrane. Functionally, contactins mediate cell surface interactions during nervous system development. Has some neurite outgrowth-promoting activity. This is Contactin-3 (Cntn3) from Rattus norvegicus (Rat).